A 356-amino-acid chain; its full sequence is Thrombomodulin (356 aa).

The Extracellular portion of the chain corresponds to 1–296; the sequence is RGARGETEGR…SPAPAGPLHS (296 aa). EGF-like domains follow at residues 17 to 57 and 60 to 98; these read GAWA…RSCG and AEHPCHQLCEHFCHLHGLGNYTCICEAGYQLAADQHRCE. 18 cysteine pairs are disulfide-bonded: C21/C32, C28/C41, C43/C56, C64/C72, C68/C82, C84/C97, C103/C114, C110/C123, C125/C136, C143/C152, C148/C162, C164/C178, C182/C191, C187/C199, C201/C213, C219/C228, C224/C237, and C239/C253. An EGF-like 3; calcium-binding domain is found at 99 to 137; that stretch reads DVDDCAQLPSPCPQRCVNTEGGFQCHCDTGYELVDGECV. EGF-like domains are found at residues 139-179 and 178-214; these read PVDP…HKCQ and CQMFCNQTSCPADCDPHYPTICRCPEGYIIDEGSTCT. Residues 215–254 enclose the EGF-like 6; calcium-binding domain; that stretch reads DINECDTNICPGQCHNLPGTYECICGPDSALSGQIGIDCD. Residues 255-290 are disordered; sequence PTQVNEERGTPEDYGGSGEPPVSPTPGATARPSPAP. An O-linked (Xyl...) (chondroitin sulfate) serine glycan is attached at S271. A helical transmembrane segment spans residues 297 to 320; sequence GVLVGISIASLSLVVALLALLCHL. Residues 321 to 356 are Cytoplasmic-facing; that stretch reads RKKQGASRGELEYKCGVPAKELMLQQVKTERTPQKL.

In terms of assembly, interacts with ITGAL, ITGAM and ITGB2. Interacts with thrombin/F2; this interaction switches the specificity of thrombin from a procoagulant to an anticoagulant and antifibrinolytic protease. Interacts with ANGP1 and ANGP2; these interactions significantly inhibit the generation of activated PC and TAFIa/CPB2 by the thrombin/thrombomodulin complex. Interacts with PF4; this interaction enhances generation of activated protein C. Interacts with HMGB1; this interaction inhibits HMGB1 inflammatory activity. As to expression, endothelial cells are unique in synthesizing thrombomodulin.

The protein localises to the membrane. In terms of biological role, endothelial cell receptor that plays a critical role in regulating several physiological processes including hemostasis, coagulation, fibrinolysis, inflammation, and angiogenesis. Acts as a cofactor for thrombin activation of protein C/PROC on the surface of vascular endothelial cells leading to initiation of the activated protein C anticoagulant pathway. Also accelerates the activation of the plasma carboxypeptidase B2/CPB2, which catalyzes removal of C-terminal basic amino acids from its substrates including kinins or anaphylatoxins leading to fibrinolysis inhibition. Plays critical protective roles in changing the cleavage specificity of protease-activated receptor 1/PAR1, inhibiting endothelial cell permeability and inflammation. Suppresses inflammation distinctly from its anticoagulant cofactor activity by sequestering HMGB1 thereby preventing it from engaging cellular receptors such as RAGE and contributing to the inflammatory response. The polypeptide is Thrombomodulin (THBD) (Bos taurus (Bovine)).